The chain runs to 338 residues: Nuclear hormone receptor family member nhr-108 (338 aa).

A DNA-binding region (nuclear receptor) is located at residues 7–82; the sequence is NQPCMVCGEI…IGMLEKVVAS (76 aa). The segment at 10–30 adopts an NR C4-type zinc-finger fold; sequence CMVCGEISYSIRFGAVSCRAC. An NR C4-type; degenerate zinc finger spans residues 46-65; sequence KRCNGACDLGKYHRKTCQSC. The NR LBD domain maps to 92–338; that stretch reads NNQTILSGLE…QCPLYEATNE (247 aa).

The protein belongs to the nuclear hormone receptor family.

The protein localises to the nucleus. Its function is as follows. Orphan nuclear receptor. The chain is Nuclear hormone receptor family member nhr-108 (nhr-108) from Caenorhabditis elegans.